The following is a 121-amino-acid chain: UPF0231 protein ESA_03214 (121 aa).

It belongs to the UPF0231 family.

This Cronobacter sakazakii (strain ATCC BAA-894) (Enterobacter sakazakii) protein is UPF0231 protein ESA_03214.